Reading from the N-terminus, the 446-residue chain is Phosphoglucosamine mutase (446 aa).

Catalysis depends on serine 101, which acts as the Phosphoserine intermediate. Residues serine 101, aspartate 240, aspartate 242, and aspartate 244 each coordinate Mg(2+). Residue serine 101 is modified to Phosphoserine.

Belongs to the phosphohexose mutase family. The cofactor is Mg(2+). Post-translationally, activated by phosphorylation.

The enzyme catalyses alpha-D-glucosamine 1-phosphate = D-glucosamine 6-phosphate. Functionally, catalyzes the conversion of glucosamine-6-phosphate to glucosamine-1-phosphate. This is Phosphoglucosamine mutase from Coxiella burnetii (strain RSA 331 / Henzerling II).